The sequence spans 40 residues: Alpha-conotoxin-like Qc1.1c (40 aa).

Positions 1–19 (SDGRNTAANDKASNLMALR) are excised as a propeptide. 2 cysteine pairs are disulfide-bonded: Cys-22–Cys-28 and Cys-23–Cys-36. Positions 24–26 (PNP) are lacks the Ser-Xaa-Pro motif that is crucial for potent interaction with nAChR.

This sequence belongs to the conotoxin A superfamily. Expressed by the venom duct.

It is found in the secreted. Alpha-conotoxins act on postsynaptic membranes, they bind to the nicotinic acetylcholine receptors (nAChR) and thus inhibit them. Has possibly a distinct nAChR binding mode from other alpha-conotoxins, due to a different three residue motif (lacks the Ser-Xaa-Pro motif). The chain is Alpha-conotoxin-like Qc1.1c from Conus quercinus (Oak cone).